The following is a 97-amino-acid chain: NELL2-interacting cell ontogeny regulator 1 (97 aa).

Residues 1–35 (MAPLPPCGPPRSPPPRLLLLLLLLSATLLGAPARA) form the signal peptide.

This sequence belongs to the NICOL family. In terms of assembly, interacts with NELL2; triggers epididymal differentiation. Interacts with cell surface receptor TFRC; the interaction mediates uptake of NICOL1 into fibroblasts.

It localises to the secreted. Its subcellular location is the cytoplasm. The protein localises to the perinuclear region. Its function is as follows. mRNA-binding protein which interacts with a range of target mRNAs including SERPINE1, ACTA2, CCN2 and COL4A1 and may promote extracellular matrix production. Binds to the 3'-UTR of SERPINE1 mRNA and stabilizes the mRNA, possibly by competing for binding with SERBP1 and preventing SERBP1-mediated mRNA degradation. Also binds to the 3'-UTR of ACTA2. Testis-derived lumicrine factor that triggers epididymal differentiation and sperm maturation. The protein is NELL2-interacting cell ontogeny regulator 1 of Bos taurus (Bovine).